The following is a 23-amino-acid chain: Caerin-4.2 (23 aa).

As to expression, expressed by the skin parotoid and/or rostral glands.

The protein resides in the secreted. Its function is as follows. Antibacterial peptide, that adopts an alpha helical conformation which can disrupt bacterial membranes. Each caerin displays a different antimicrobial specificity. The chain is Caerin-4.2 from Ranoidea caerulea (Green tree frog).